Here is a 487-residue protein sequence, read N- to C-terminus: Probable cytosol aminopeptidase (487 aa).

Mn(2+) contacts are provided by Lys-253 and Asp-258. The active site involves Lys-265. 3 residues coordinate Mn(2+): Asp-277, Asp-337, and Glu-339. The active site involves Arg-341.

It belongs to the peptidase M17 family. Mn(2+) serves as cofactor.

Its subcellular location is the cytoplasm. It carries out the reaction Release of an N-terminal amino acid, Xaa-|-Yaa-, in which Xaa is preferably Leu, but may be other amino acids including Pro although not Arg or Lys, and Yaa may be Pro. Amino acid amides and methyl esters are also readily hydrolyzed, but rates on arylamides are exceedingly low.. The enzyme catalyses Release of an N-terminal amino acid, preferentially leucine, but not glutamic or aspartic acids.. In terms of biological role, presumably involved in the processing and regular turnover of intracellular proteins. Catalyzes the removal of unsubstituted N-terminal amino acids from various peptides. This Parasynechococcus marenigrum (strain WH8102) protein is Probable cytosol aminopeptidase.